The primary structure comprises 317 residues: Serpentine receptor class delta-44 (317 aa).

The next 6 membrane-spanning stretches (helical) occupy residues 5–25 (ILSV…IILI), 90–110 (MFHI…LTTF), 130–150 (ILFI…LVII), 185–205 (RVNG…CLLL), 235–255 (IFGH…SLIT), and 264–284 (FFIF…TMYF).

This sequence belongs to the nematode receptor-like protein srd family.

Its subcellular location is the membrane. This is Serpentine receptor class delta-44 (srd-44) from Caenorhabditis elegans.